Reading from the N-terminus, the 470-residue chain is Glutamate--tRNA ligase (470 aa).

Residues 9–19 (PSPTGFLHVGG) carry the 'HIGH' region motif. The 'KMSKS' region signature appears at 236–240 (RLSKR). Lys239 lines the ATP pocket.

Belongs to the class-I aminoacyl-tRNA synthetase family. Glutamate--tRNA ligase type 1 subfamily. In terms of assembly, monomer.

It localises to the cytoplasm. The catalysed reaction is tRNA(Glu) + L-glutamate + ATP = L-glutamyl-tRNA(Glu) + AMP + diphosphate. In terms of biological role, catalyzes the attachment of glutamate to tRNA(Glu) in a two-step reaction: glutamate is first activated by ATP to form Glu-AMP and then transferred to the acceptor end of tRNA(Glu). In Legionella pneumophila (strain Corby), this protein is Glutamate--tRNA ligase.